Consider the following 182-residue polypeptide: NADH-quinone oxidoreductase subunit I (182 aa).

4Fe-4S ferredoxin-type domains follow at residues Leu-52 to Ala-82 and Glu-92 to Asp-121. 8 residues coordinate [4Fe-4S] cluster: Cys-62, Cys-65, Cys-68, Cys-72, Cys-101, Cys-104, Cys-107, and Cys-111.

This sequence belongs to the complex I 23 kDa subunit family. In terms of assembly, NDH-1 is composed of 13 different subunits. Subunits NuoA, H, J, K, L, M, N constitute the membrane sector of the complex. It depends on [4Fe-4S] cluster as a cofactor.

The protein resides in the cell inner membrane. It carries out the reaction a quinone + NADH + 5 H(+)(in) = a quinol + NAD(+) + 4 H(+)(out). Functionally, NDH-1 shuttles electrons from NADH, via FMN and iron-sulfur (Fe-S) centers, to quinones in the respiratory chain. The immediate electron acceptor for the enzyme in this species is believed to be ubiquinone. Couples the redox reaction to proton translocation (for every two electrons transferred, four hydrogen ions are translocated across the cytoplasmic membrane), and thus conserves the redox energy in a proton gradient. This Pseudomonas putida (strain ATCC 47054 / DSM 6125 / CFBP 8728 / NCIMB 11950 / KT2440) protein is NADH-quinone oxidoreductase subunit I.